The following is a 1081-amino-acid chain: Protein QUIRKY (1081 aa).

The C2 1 domain occupies 1–124; sequence MNTTPFHSDP…SRRGEEGLVY (124 aa). 2 disordered regions span residues 154-198 and 238-323; these read DTAG…MNIP and PQHV…MEKK. Residues 163–176 are compositionally biased toward low complexity; that stretch reads QQQQQQQQFHPPQQ. Positions 248–257 are enriched in basic and acidic residues; the sequence is NHPHRNDNHP. Pro residues predominate over residues 258 to 268; sequence QRPPSPPPPPS. 3 consecutive C2 domains span residues 318–440, 477–605, and 652–778; these read TTME…PQWY, SSDA…SKWH, and VCSD…TNSY. 4 residues coordinate Ca(2+): glutamate 351, serine 352, aspartate 408, and serine 413. Transmembrane regions (helical) follow at residues 879 to 899, 916 to 936, and 1024 to 1044; these read WYRIVGVLAWAVGLAKWLDNI, LVLVWYPDLVVPTAFLYVVMI, and LFIAICLVITIVLYAVPAKMV.

Belongs to the MCTP family. As to quaternary structure, interacts with SUB/SCM and POQ at the plasma membrane. Binds to SUB/SCM at plasmodesmata (PD) in root epidermal cells to promote tissue morphogenesis. Ca(2+) is required as a cofactor. As to expression, observed mainly in flowers, and, to a lower extent, in seedlings, roots, shoots, leaves, stems and inflorescences. Expressed in the vascular tissues of roots, cotyledons and rosette leaves. Accumulates in roots meristems.

It localises to the cell membrane. It is found in the cytoplasm. The protein resides in the golgi apparatus membrane. The protein localises to the cell junction. Its subcellular location is the plasmodesma. In terms of biological role, may be involved in Ca 2(+)-dependent signaling and membrane trafficking. Plays a role in fruit dehiscence. Components of the machinery involved in organ development mediated by the receptor-like kinase STRUBBELIG (SUB). Collaboratively with SUB and POQ, regulates cell growth anisotropy during gynoecium development, thus linking together cell-cell communication and cellular growth. Together with SUB/SCM, links RLK-dependent signal transduction and intercellular communication mediated by plasmodesmata (PD) to regulate tissue morphogenesis. May function as a signaling molecule by regulating the trafficking of other regulators. In Arabidopsis thaliana (Mouse-ear cress), this protein is Protein QUIRKY.